The sequence spans 226 residues: 3-dehydroquinate dehydratase (226 aa).

Residues 33 to 35 and arginine 65 contribute to the 3-dehydroquinate site; that span reads ELR. The active-site Proton donor/acceptor is the histidine 120. Lysine 147 serves as the catalytic Schiff-base intermediate with substrate. The 3-dehydroquinate site is built by arginine 186, serine 205, and glutamine 209.

This sequence belongs to the type-I 3-dehydroquinase family. As to quaternary structure, homodimer.

It catalyses the reaction 3-dehydroquinate = 3-dehydroshikimate + H2O. It participates in metabolic intermediate biosynthesis; chorismate biosynthesis; chorismate from D-erythrose 4-phosphate and phosphoenolpyruvate: step 3/7. Its function is as follows. Involved in the third step of the chorismate pathway, which leads to the biosynthesis of aromatic amino acids. Catalyzes the cis-dehydration of 3-dehydroquinate (DHQ) and introduces the first double bond of the aromatic ring to yield 3-dehydroshikimate. The chain is 3-dehydroquinate dehydratase from Thermodesulfovibrio yellowstonii (strain ATCC 51303 / DSM 11347 / YP87).